A 156-amino-acid chain; its full sequence is ATP synthase subunit b (156 aa).

Residues 7 to 29 (LFGQTVAFILFVWFCMKFVWPPL) traverse the membrane as a helical segment.

The protein belongs to the ATPase B chain family. As to quaternary structure, F-type ATPases have 2 components, F(1) - the catalytic core - and F(0) - the membrane proton channel. F(1) has five subunits: alpha(3), beta(3), gamma(1), delta(1), epsilon(1). F(0) has three main subunits: a(1), b(2) and c(10-14). The alpha and beta chains form an alternating ring which encloses part of the gamma chain. F(1) is attached to F(0) by a central stalk formed by the gamma and epsilon chains, while a peripheral stalk is formed by the delta and b chains.

Its subcellular location is the cell inner membrane. Functionally, f(1)F(0) ATP synthase produces ATP from ADP in the presence of a proton or sodium gradient. F-type ATPases consist of two structural domains, F(1) containing the extramembraneous catalytic core and F(0) containing the membrane proton channel, linked together by a central stalk and a peripheral stalk. During catalysis, ATP synthesis in the catalytic domain of F(1) is coupled via a rotary mechanism of the central stalk subunits to proton translocation. In terms of biological role, component of the F(0) channel, it forms part of the peripheral stalk, linking F(1) to F(0). The polypeptide is ATP synthase subunit b (Shewanella frigidimarina (strain NCIMB 400)).